A 214-amino-acid polypeptide reads, in one-letter code: Immunoglobulin lambda-like polypeptide 5 (214 aa).

A signal peptide spans 1 to 35 (MRPKTGQVGCETPEELGPGPRQRWPLLLLGLAMVA). Residues 98-109 (VFGTGTKVTVLG) are j region. The interval 110–214 (QPKANPTVTL…EKTVAPTECS (105 aa)) is c region. In terms of domain architecture, Ig-like C1-type spans 115-209 (PTVTLFPPSS…EGSTVEKTVA (95 aa)). Cysteines 136 and 195 form a disulfide.

In terms of tissue distribution, contrary to IGLL1, not expressed in pre-B-cells.

Its subcellular location is the secreted. In Homo sapiens (Human), this protein is Immunoglobulin lambda-like polypeptide 5 (IGLL5).